The following is a 152-amino-acid chain: MKLLVAAVGRWRGGPERALFDHYVGRLKGGLAVIEVEERRPLPVAERKAREAELLLAQLPPGAFVVALDEHGEAWGSERLARELDQRRLEARPAAVFAIGGADGHGEALLARADRKLALGVMTWPHMLVRGLIAEQLYRAQCISGGHPYHRS.

S-adenosyl-L-methionine contacts are provided by residues leucine 68, glycine 100, and 119 to 124; that span reads LGVMTW.

The protein belongs to the RNA methyltransferase RlmH family. In terms of assembly, homodimer.

The protein localises to the cytoplasm. The enzyme catalyses pseudouridine(1915) in 23S rRNA + S-adenosyl-L-methionine = N(3)-methylpseudouridine(1915) in 23S rRNA + S-adenosyl-L-homocysteine + H(+). In terms of biological role, specifically methylates the pseudouridine at position 1915 (m3Psi1915) in 23S rRNA. This is Ribosomal RNA large subunit methyltransferase H from Rhodospirillum rubrum (strain ATCC 11170 / ATH 1.1.1 / DSM 467 / LMG 4362 / NCIMB 8255 / S1).